The sequence spans 1450 residues: Auxilin-like protein 1 (1450 aa).

11 disordered regions span residues 117-142 (NEDK…GKKS), 241-318 (STRD…AESS), 357-383 (DSKI…SQIL), 459-480 (NSKQ…TKQE), 512-541 (SQKD…SQEM), 556-575 (EETP…EKSE), 908-946 (DRSE…RSSF), 961-1046 (EQHR…ELEH), 1077-1168 (GAAT…ERKQ), 1192-1241 (AGKT…AERA), and 1254-1328 (AMEK…SDRA). The stretch at 316-344 (ESSAALKKAIEEAQIRMNIAKQMMEKKKS) forms a coiled coil. The segment covering 357 to 366 (DSKIENKGNT) has biased composition (basic and acidic residues). 7 stretches are compositionally biased toward basic and acidic residues: residues 512 to 524 (SQKD…EKEN), 564 to 575 (SKSEMNIEEKSE), 908 to 923 (DRSE…RFDQ), 1037 to 1046 (RNGDKKELEH), 1117 to 1131 (NMKE…RSSM), 1147 to 1168 (ETVE…ERKQ), and 1192 to 1226 (AGKT…KLSS). Coiled coils occupy residues 1142-1184 (SQNK…RERA) and 1219-1257 (EVND…AMEK). Residues 1270-1299 (SYGGSKSFSSSGERRGSSSSGTENKSSGPS) show a composition bias toward low complexity. Over residues 1310-1328 (PIQRCKARSERHQRTSDRA) the composition is skewed to basic and acidic residues. Residues 1327–1355 (RAAEALAEKKLRDLKTQKEQTERNRLAEA) adopt a coiled-coil conformation. The region spanning 1377 to 1450 (TLQYILGAES…AWNKFGADER (74 aa)) is the J domain.

In Arabidopsis thaliana (Mouse-ear cress), this protein is Auxilin-like protein 1 (AUL1).